The sequence spans 180 residues: MTVRLREKYQKEVVPALMEEFKFKSIMQVPRLVKIVVNVGVGEAVQNAKAIEAAVNDLATITGQKPVVTRAKKSVASFKLRAGMPIGAMVTLRGDRMYDFLDRLCSLALPRIRDFRGVSRSSFDGRGNYSLGLREQIVFPDIDYDKIDKIRGLEVAIVTSAPNDEQAYALLKRLGMPFRD.

Belongs to the universal ribosomal protein uL5 family. Part of the 50S ribosomal subunit; part of the 5S rRNA/L5/L18/L25 subcomplex. Contacts the 5S rRNA and the P site tRNA. Forms a bridge to the 30S subunit in the 70S ribosome.

Its function is as follows. This is one of the proteins that bind and probably mediate the attachment of the 5S RNA into the large ribosomal subunit, where it forms part of the central protuberance. In the 70S ribosome it contacts protein S13 of the 30S subunit (bridge B1b), connecting the 2 subunits; this bridge is implicated in subunit movement. Contacts the P site tRNA; the 5S rRNA and some of its associated proteins might help stabilize positioning of ribosome-bound tRNAs. This chain is Large ribosomal subunit protein uL5, found in Chloroflexus aurantiacus (strain ATCC 29364 / DSM 637 / Y-400-fl).